The chain runs to 163 residues: Phosphopantetheine adenylyltransferase (163 aa).

A substrate-binding site is contributed by Ser11. ATP contacts are provided by residues 11–12 and His19; that span reads SF. The substrate site is built by Lys43, Ala76, and Arg90. ATP contacts are provided by residues 91 to 93, Glu101, and 126 to 132; these read GLR and WQALSSS.

This sequence belongs to the bacterial CoaD family. Homohexamer. Mg(2+) is required as a cofactor.

The protein localises to the cytoplasm. The catalysed reaction is (R)-4'-phosphopantetheine + ATP + H(+) = 3'-dephospho-CoA + diphosphate. The protein operates within cofactor biosynthesis; coenzyme A biosynthesis; CoA from (R)-pantothenate: step 4/5. Its function is as follows. Reversibly transfers an adenylyl group from ATP to 4'-phosphopantetheine, yielding dephospho-CoA (dPCoA) and pyrophosphate. This Streptococcus pyogenes serotype M6 (strain ATCC BAA-946 / MGAS10394) protein is Phosphopantetheine adenylyltransferase.